We begin with the raw amino-acid sequence, 1160 residues long: MSEPRFVHLRVHSDYSMIDGLAKTAPLVKKAAALGMPALAITDFTNLCGLVKFYGAGHGAGIKPIVGADFNVQCDLLGDELTHLTVLAANNIGYQNLTLLISKAYQRGYGAAGPIIDRDWLIELNEGLILLSGGRMGDVGRSLLRGNSALVDECVAFYEEHFPDRYFLELIRTGRPDEESYLHAAVELAEARGLPVVATNDVRFIDSSDFDAHEIRVAIHDGFTLDDPKRPRNYSPQQYMRSEEEMCELFADIPEALANTVEIAKRCNVTVRLGEYFLPQFPTGDMSTEDYLVKRAKEGLEERLAFLFPDEEERLKRRPEYDERLDTELQVINQMGFPGYFLIVMEFIQWSKDNGVPVGPGRGSGAGSLVAYALKITDLDPLEFDLLFERFLNPERVSMPDFDVDFCMEKRDQVIEHVADMYGRDAVSQIITFGTMAAKAVIRDVGRVLGHPYGFVDRISKLIPPDPGMTLAKAFEAEPQLPEIYEADEEVKALIDMARKLEGVTRNAGKHAGGVVIAPTKITDFAPLYCDEEGKHPVTQFDKSDVEYAGLVKFDFLGLRTLTIINWALEMINKRRAKNGEPPLDIAAIPLDDKKSFDMLQRSETTAVFQLESRGMKDLIKRLQPDCFEDMIALVALFRPGPLQSGMVDNFIDRKHGREEISYPDVQWQHESLKPVLEPTYGIILYQEQVMQIAQVLSGYTLGGADMLRRAMGKKKPEEMAKQRSVFAEGAEKNGINAELAMKIFDLVEKFAGYGFNKSHSAAYALVSYQTLWLKAHYPAEFMAAVMTADMDNTEKVVGLVDECWRMGLKILPPDINSGLYHFHVNDDGEIVYGIGAIKGVGEGPIEAIIEARNKGGYFRELFDLCARTDTKKLNRRVLEKLIMSGAFDRLGPHRAALMNSLGDALKAADQHAKAEAIGQADMFGVLAEEPEQIEQSYASCQPWPEQVVLDGERETLGLYLTGHPINQYLKEIERYVGGVRLKDMHPTERGKVTTAAGLVVAARVMVTKRGNRIGICTLDDRSGRLEVMLFTDALDKYQQLLEKDRILIVSGQVSFDDFSGGLKMTAREVMDIDEAREKYARGLAISLTDRQIDDQLLNRLRQSLEPHRSGTIPVHLYYQRADARARLRFGATWRVSPSDRLLNDLRGLIGSEQVELEFD.

The protein resides in the cytoplasm. It catalyses the reaction DNA(n) + a 2'-deoxyribonucleoside 5'-triphosphate = DNA(n+1) + diphosphate. Functionally, DNA polymerase III is a complex, multichain enzyme responsible for most of the replicative synthesis in bacteria. This DNA polymerase also exhibits 3' to 5' exonuclease activity. The alpha chain is the DNA polymerase. This Escherichia coli O6:H1 (strain CFT073 / ATCC 700928 / UPEC) protein is DNA polymerase III subunit alpha (dnaE).